We begin with the raw amino-acid sequence, 240 residues long: Ubiquinone biosynthesis O-methyltransferase (240 aa).

The S-adenosyl-L-methionine site is built by R44, G64, D85, and M129.

Belongs to the methyltransferase superfamily. UbiG/COQ3 family.

The enzyme catalyses a 3-demethylubiquinol + S-adenosyl-L-methionine = a ubiquinol + S-adenosyl-L-homocysteine + H(+). It carries out the reaction a 3-(all-trans-polyprenyl)benzene-1,2-diol + S-adenosyl-L-methionine = a 2-methoxy-6-(all-trans-polyprenyl)phenol + S-adenosyl-L-homocysteine + H(+). It functions in the pathway cofactor biosynthesis; ubiquinone biosynthesis. In terms of biological role, O-methyltransferase that catalyzes the 2 O-methylation steps in the ubiquinone biosynthetic pathway. In Escherichia coli O8 (strain IAI1), this protein is Ubiquinone biosynthesis O-methyltransferase.